Reading from the N-terminus, the 257-residue chain is Pyridoxine 5'-phosphate synthase (257 aa).

N6 contributes to the 3-amino-2-oxopropyl phosphate binding site. D8 to H9 is a binding site for 1-deoxy-D-xylulose 5-phosphate. Residue R17 coordinates 3-amino-2-oxopropyl phosphate. H41 acts as the Proton acceptor in catalysis. 1-deoxy-D-xylulose 5-phosphate contacts are provided by R43 and H48. E68 functions as the Proton acceptor in the catalytic mechanism. 1-deoxy-D-xylulose 5-phosphate is bound at residue T98. Catalysis depends on H210, which acts as the Proton donor. 3-amino-2-oxopropyl phosphate contacts are provided by residues G211 and G232–Q233.

The protein belongs to the PNP synthase family. In terms of assembly, homooctamer; tetramer of dimers.

Its subcellular location is the cytoplasm. It carries out the reaction 3-amino-2-oxopropyl phosphate + 1-deoxy-D-xylulose 5-phosphate = pyridoxine 5'-phosphate + phosphate + 2 H2O + H(+). It participates in cofactor biosynthesis; pyridoxine 5'-phosphate biosynthesis; pyridoxine 5'-phosphate from D-erythrose 4-phosphate: step 5/5. In terms of biological role, catalyzes the complicated ring closure reaction between the two acyclic compounds 1-deoxy-D-xylulose-5-phosphate (DXP) and 3-amino-2-oxopropyl phosphate (1-amino-acetone-3-phosphate or AAP) to form pyridoxine 5'-phosphate (PNP) and inorganic phosphate. This is Pyridoxine 5'-phosphate synthase from Campylobacter jejuni (strain RM1221).